The sequence spans 161 residues: Probable ribosome biogenesis protein RLP24 (161 aa).

It belongs to the eukaryotic ribosomal protein eL24 family. As to quaternary structure, associated with nucleolar and cytoplasmic pre-60S particles. At the end of biogenesis it dissociates from cytoplasmic pre-60S particles and is likely to be exchanged for its ribosomal homolog, RPL24.

The protein resides in the nucleus. It is found in the nucleolus. Functionally, involved in the biogenesis of the 60S ribosomal subunit. Ensures the docking of GTPBP4/NOG1 to pre-60S particles. This chain is Probable ribosome biogenesis protein RLP24 (rsl24d1), found in Danio rerio (Zebrafish).